The primary structure comprises 270 residues: Acetyl-coenzyme A carboxylase carboxyl transferase subunit beta (270 aa).

A CoA carboxyltransferase N-terminal domain is found at 16–270 (LFAKCPACKH…KLLAFHGGSK (255 aa)). Cysteine 20, cysteine 23, cysteine 38, and cysteine 41 together coordinate Zn(2+). Residues 20–41 (CPACKHMIYQKDLGLEKICPKC) form a C4-type zinc finger.

It belongs to the AccD/PCCB family. Acetyl-CoA carboxylase is a heterohexamer composed of biotin carboxyl carrier protein (AccB), biotin carboxylase (AccC) and two subunits each of ACCase subunit alpha (AccA) and ACCase subunit beta (AccD). It depends on Zn(2+) as a cofactor.

It is found in the cytoplasm. It catalyses the reaction N(6)-carboxybiotinyl-L-lysyl-[protein] + acetyl-CoA = N(6)-biotinyl-L-lysyl-[protein] + malonyl-CoA. Its pathway is lipid metabolism; malonyl-CoA biosynthesis; malonyl-CoA from acetyl-CoA: step 1/1. Component of the acetyl coenzyme A carboxylase (ACC) complex. Biotin carboxylase (BC) catalyzes the carboxylation of biotin on its carrier protein (BCCP) and then the CO(2) group is transferred by the transcarboxylase to acetyl-CoA to form malonyl-CoA. This Streptococcus mutans serotype c (strain NN2025) protein is Acetyl-coenzyme A carboxylase carboxyl transferase subunit beta.